We begin with the raw amino-acid sequence, 72 residues long: Large ribosomal subunit protein bL31 (72 aa).

Positions 16, 18, 37, and 40 each coordinate Zn(2+).

It belongs to the bacterial ribosomal protein bL31 family. Type A subfamily. In terms of assembly, part of the 50S ribosomal subunit. The cofactor is Zn(2+).

Its function is as follows. Binds the 23S rRNA. This is Large ribosomal subunit protein bL31 from Idiomarina loihiensis (strain ATCC BAA-735 / DSM 15497 / L2-TR).